The primary structure comprises 109 residues: Large ribosomal subunit protein uL22 (109 aa).

This sequence belongs to the universal ribosomal protein uL22 family. As to quaternary structure, part of the 50S ribosomal subunit.

Functionally, this protein binds specifically to 23S rRNA; its binding is stimulated by other ribosomal proteins, e.g. L4, L17, and L20. It is important during the early stages of 50S assembly. It makes multiple contacts with different domains of the 23S rRNA in the assembled 50S subunit and ribosome. The globular domain of the protein is located near the polypeptide exit tunnel on the outside of the subunit, while an extended beta-hairpin is found that lines the wall of the exit tunnel in the center of the 70S ribosome. The protein is Large ribosomal subunit protein uL22 of Cupriavidus taiwanensis (strain DSM 17343 / BCRC 17206 / CCUG 44338 / CIP 107171 / LMG 19424 / R1) (Ralstonia taiwanensis (strain LMG 19424)).